Here is a 602-residue protein sequence, read N- to C-terminus: Probable translation initiation factor IF-2 (602 aa).

Positions 18 to 233 constitute a tr-type G domain; it reads LRTPIVCVMG…LVGLAQRFLK (216 aa). A G1 region spans residues 27–34; the sequence is GHVDHGKT. Position 27–34 (27–34) interacts with GTP; it reads GHVDHGKT. Residues 52–56 form a G2 region; the sequence is AITQH. The G3 stretch occupies residues 88-91; the sequence is DTPG. GTP contacts are provided by residues 88–92 and 142–145; these read DTPGH and NKID. The interval 142–145 is G4; the sequence is NKID. The G5 stretch occupies residues 210 to 212; it reads SAI.

Belongs to the TRAFAC class translation factor GTPase superfamily. Classic translation factor GTPase family. IF-2 subfamily.

Its function is as follows. Function in general translation initiation by promoting the binding of the formylmethionine-tRNA to ribosomes. Seems to function along with eIF-2. The polypeptide is Probable translation initiation factor IF-2 (Methanothrix thermoacetophila (strain DSM 6194 / JCM 14653 / NBRC 101360 / PT) (Methanosaeta thermophila)).